Here is a 178-residue protein sequence, read N- to C-terminus: Probable chorismate pyruvate-lyase (178 aa).

Arginine 73, leucine 111, and glutamate 163 together coordinate substrate.

Belongs to the UbiC family.

It localises to the cytoplasm. The catalysed reaction is chorismate = 4-hydroxybenzoate + pyruvate. Its pathway is cofactor biosynthesis; ubiquinone biosynthesis. Removes the pyruvyl group from chorismate, with concomitant aromatization of the ring, to provide 4-hydroxybenzoate (4HB) for the ubiquinone pathway. The polypeptide is Probable chorismate pyruvate-lyase (Pseudomonas aeruginosa (strain UCBPP-PA14)).